A 308-amino-acid polypeptide reads, in one-letter code: Tetraacyldisaccharide 4'-kinase (308 aa).

ATP is bound at residue S63–T70.

The protein belongs to the LpxK family.

It catalyses the reaction a lipid A disaccharide + ATP = a lipid IVA + ADP + H(+). Its pathway is glycolipid biosynthesis; lipid IV(A) biosynthesis; lipid IV(A) from (3R)-3-hydroxytetradecanoyl-[acyl-carrier-protein] and UDP-N-acetyl-alpha-D-glucosamine: step 6/6. In terms of biological role, transfers the gamma-phosphate of ATP to the 4'-position of a tetraacyldisaccharide 1-phosphate intermediate (termed DS-1-P) to form tetraacyldisaccharide 1,4'-bis-phosphate (lipid IVA). The polypeptide is Tetraacyldisaccharide 4'-kinase (Campylobacter jejuni subsp. jejuni serotype O:23/36 (strain 81-176)).